Reading from the N-terminus, the 148-residue chain is Lipid droplet organization protein LDO16 (148 aa).

Topologically, residues 1–7 (MVSTATF) are cytoplasmic. A helical transmembrane segment spans residues 8-28 (FFFVYLTLFVVIGFFSSLFII). Proline 29 is a topological domain (lumenal). The helical transmembrane segment at 30 to 50 (LLGISFVFAIGVVSFGFCSNM) threads the bilayer. The Cytoplasmic segment spans residues 51-148 (SFKMAQLIYV…NKAGNKFQLS (98 aa)). The disordered stretch occupies residues 83–110 (QEPQEPLSTLRPVSNPTIPSPLRQTARP). The span at 93-109 (RPVSNPTIPSPLRQTAR) shows a compositional bias: polar residues. Phosphoserine is present on serine 102.

This sequence belongs to the OSW5 family. In terms of assembly, interacts specifically with the seipin complex FLD1-LDB16. Only a fraction appears to associate with the seipin core components, suggesting that it may be an ancillary subunit of the complex. Found to interact with many mitochondrial and peroxisomal proteins.

The protein resides in the endoplasmic reticulum membrane. Its subcellular location is the lipid droplet. Involved in lipid droplet (LD) organization. Functions primarily upon nutrient depletion, facilitating LD consumption by lipophagy. Required for correct LD distribution during entry into stationary phase, where LDs accumulate at nucleus-vacuole junction (NVJ) contact sites. Involved in membrane interaction in a manner similar to those of SNARE proteins, binding to partners present in mitochondria or peroxisomes. Its partner on the mitochondrion side might be TOM22, a mitochondrial outer membrane protein, linking lipid droplets and mitochondria by protein-protein interaction. Involved in spore wall assembly. In Saccharomyces cerevisiae (strain ATCC 204508 / S288c) (Baker's yeast), this protein is Lipid droplet organization protein LDO16.